The sequence spans 327 residues: Biotin synthase (327 aa).

In terms of domain architecture, Radical SAM core spans 49-275; the sequence is RFGREVSLCS…VNPHAEVRMA (227 aa). 3 residues coordinate [4Fe-4S] cluster: cysteine 67, cysteine 71, and cysteine 74. [2Fe-2S] cluster is bound by residues serine 112, cysteine 143, cysteine 203, and arginine 273.

Belongs to the radical SAM superfamily. Biotin synthase family. As to quaternary structure, homodimer. Requires [4Fe-4S] cluster as cofactor. The cofactor is [2Fe-2S] cluster.

It carries out the reaction (4R,5S)-dethiobiotin + (sulfur carrier)-SH + 2 reduced [2Fe-2S]-[ferredoxin] + 2 S-adenosyl-L-methionine = (sulfur carrier)-H + biotin + 2 5'-deoxyadenosine + 2 L-methionine + 2 oxidized [2Fe-2S]-[ferredoxin]. It functions in the pathway cofactor biosynthesis; biotin biosynthesis; biotin from 7,8-diaminononanoate: step 2/2. Its function is as follows. Catalyzes the conversion of dethiobiotin (DTB) to biotin by the insertion of a sulfur atom into dethiobiotin via a radical-based mechanism. In Maridesulfovibrio salexigens (strain ATCC 14822 / DSM 2638 / NCIMB 8403 / VKM B-1763) (Desulfovibrio salexigens), this protein is Biotin synthase.